Consider the following 754-residue polypeptide: 1,4-alpha-glucan branching enzyme GlgB (754 aa).

Asp431 acts as the Nucleophile in catalysis. Glu484 acts as the Proton donor in catalysis.

Belongs to the glycosyl hydrolase 13 family. GlgB subfamily. Monomer.

It catalyses the reaction Transfers a segment of a (1-&gt;4)-alpha-D-glucan chain to a primary hydroxy group in a similar glucan chain.. It participates in glycan biosynthesis; glycogen biosynthesis. In terms of biological role, catalyzes the formation of the alpha-1,6-glucosidic linkages in glycogen by scission of a 1,4-alpha-linked oligosaccharide from growing alpha-1,4-glucan chains and the subsequent attachment of the oligosaccharide to the alpha-1,6 position. The polypeptide is 1,4-alpha-glucan branching enzyme GlgB (Prochlorococcus marinus (strain MIT 9215)).